Consider the following 391-residue polypeptide: MKEFEFLKAELDKMKENKTWQQMKQIETKQGPSVEVKGENVIQLSSNNYLGLTSHPRLVEAAKRAAEEFGAGTGSVRTIAGTFTMHNELEKKLANFKKTEAALVFQSGFTTNQGVLSSILTKEDIVISDELNHASIIDGIRLTKADKKVYRHVDMDDLERVLKKSMNYRMRLIVTDGVFSMDGNIAPLPDIVKLAEAYDAFVMVDDAHASGVLGKNGRGTVNHFGLDGRVHIQVGTLSKAIGVLGGYAAGSQVLIDYLRHKGRPFLFSTSHPPAVTAACIEAIDVLLEEPEHMEKLWENTAYFKDKLVQMGLTLTKSETPIVPILIGEEEKAQALSDLLLTRGVFAQSIVYPTVAQGKARIRTIITAEHTNEELDRALEVIRSAAKELQLV.

108–109 lines the pyridoxal 5'-phosphate pocket; the sequence is GF. H133 provides a ligand contact to substrate. Residues S180, 205 to 208, and 236 to 239 each bind pyridoxal 5'-phosphate; these read DDAH and TLSK. At K239 the chain carries N6-(pyridoxal phosphate)lysine. T353 is a substrate binding site.

This sequence belongs to the class-II pyridoxal-phosphate-dependent aminotransferase family. BioF subfamily. Homodimer. It depends on pyridoxal 5'-phosphate as a cofactor.

The enzyme catalyses 6-carboxyhexanoyl-[ACP] + L-alanine + H(+) = (8S)-8-amino-7-oxononanoate + holo-[ACP] + CO2. Its pathway is cofactor biosynthesis; biotin biosynthesis. Functionally, catalyzes the decarboxylative condensation of pimeloyl-[acyl-carrier protein] and L-alanine to produce 8-amino-7-oxononanoate (AON), [acyl-carrier protein], and carbon dioxide. The polypeptide is 8-amino-7-oxononanoate synthase 1 (Bacillus velezensis (strain DSM 23117 / BGSC 10A6 / LMG 26770 / FZB42) (Bacillus amyloliquefaciens subsp. plantarum)).